Here is a 419-residue protein sequence, read N- to C-terminus: UDP-arabinose 4-epimerase 1 (419 aa).

Residues 1 to 21 are disordered; that stretch reads MFSFGRARSQGRQNRSMSLGG. Residues 1-32 are Cytoplasmic-facing; that stretch reads MFSFGRARSQGRQNRSMSLGGLDYADPKKKNN. The chain crosses the membrane as a helical; Signal-anchor for type II membrane protein span at residues 33–51; it reads YLGKILLTASLTALCIFML. The Lumenal segment spans residues 52–419; it reads KQSPTFNTPS…GLTTSSVSVY (368 aa). Residue 72–103 participates in NAD(+) binding; that stretch reads HVLVTGGAGYIGSHAALRLLKESYRVTIVDNL. The Proton acceptor role is filled by Tyr220.

This sequence belongs to the NAD(P)-dependent epimerase/dehydratase family. It depends on NAD(+) as a cofactor. As to expression, high expression in roots. Also found in leaves, stems, flowers, and siliques.

It localises to the golgi apparatus. The protein localises to the golgi stack membrane. It catalyses the reaction UDP-beta-L-arabinopyranose = UDP-alpha-D-xylose. The protein operates within nucleotide-sugar biosynthesis; UDP-L-arabinose biosynthesis; UDP-L-arabinose from UDP-alpha-D-xylose: step 1/1. It functions in the pathway cell wall biogenesis; cell wall polysaccharide biosynthesis. Acts as a UDP-D-xylose 4-epimerase but lacks both UDP-D-glucose and UDP-D-glucuronic acid 4-epimerase activities in vitro. The protein is UDP-arabinose 4-epimerase 1 of Arabidopsis thaliana (Mouse-ear cress).